We begin with the raw amino-acid sequence, 329 residues long: DNA-directed RNA polymerase subunit alpha (329 aa).

The tract at residues 1–231 (MQTTLLKPKT…EQLAVFAQLE (231 aa)) is alpha N-terminal domain (alpha-NTD). The tract at residues 249–329 (FDPILLRPVD…SWPPAGLDKR (81 aa)) is alpha C-terminal domain (alpha-CTD).

It belongs to the RNA polymerase alpha chain family. As to quaternary structure, homodimer. The RNAP catalytic core consists of 2 alpha, 1 beta, 1 beta' and 1 omega subunit. When a sigma factor is associated with the core the holoenzyme is formed, which can initiate transcription.

It catalyses the reaction RNA(n) + a ribonucleoside 5'-triphosphate = RNA(n+1) + diphosphate. DNA-dependent RNA polymerase catalyzes the transcription of DNA into RNA using the four ribonucleoside triphosphates as substrates. This Variovorax paradoxus (strain S110) protein is DNA-directed RNA polymerase subunit alpha.